The sequence spans 506 residues: Galactose/methyl galactoside import ATP-binding protein MglA (506 aa).

ABC transporter domains are found at residues 14–249 and 264–506; these read LEMS…VGRS and VILE…SLHL. 46–53 serves as a coordination point for ATP; the sequence is GENGAGKS.

The protein belongs to the ABC transporter superfamily. Galactose/methyl galactoside importer (TC 3.A.1.2.3) family. In terms of assembly, the complex is composed of one ATP-binding protein (MglA), two transmembrane proteins (MglC) and a solute-binding protein (MglB).

Its subcellular location is the cell inner membrane. The catalysed reaction is D-galactose(out) + ATP + H2O = D-galactose(in) + ADP + phosphate + H(+). It catalyses the reaction methyl beta-D-galactoside(out) + ATP + H2O = methyl beta-D-galactoside(in) + ADP + phosphate + H(+). Part of the ABC transporter complex MglABC involved in galactose/methyl galactoside import. Responsible for energy coupling to the transport system. In Escherichia coli O157:H7, this protein is Galactose/methyl galactoside import ATP-binding protein MglA.